A 259-amino-acid chain; its full sequence is ATP synthase subunit a 1 (259 aa).

The next 5 helical transmembrane spans lie at 30 to 50 (TLHVDTLFFSVFLGAVFLFFF), 90 to 110 (LIAPLALSIFAWVFLMNAMDL), 135 to 155 (DLNATFGMSISVFFLIIFYSL), 209 to 229 (LIFILIALLPWWVQPALSFPW), and 230 to 250 (AVFHILIITLQAFIFMVLTIV).

This sequence belongs to the ATPase A chain family. In terms of assembly, F-type ATPases have 2 components, CF(1) - the catalytic core - and CF(0) - the membrane proton channel. CF(1) has five subunits: alpha(3), beta(3), gamma(1), delta(1), epsilon(1). CF(0) has three main subunits: a(1), b(2) and c(9-12). The alpha and beta chains form an alternating ring which encloses part of the gamma chain. CF(1) is attached to CF(0) by a central stalk formed by the gamma and epsilon chains, while a peripheral stalk is formed by the delta and b chains.

The protein resides in the cell inner membrane. Key component of the proton channel; it plays a direct role in the translocation of protons across the membrane. In Methylococcus capsulatus (strain ATCC 33009 / NCIMB 11132 / Bath), this protein is ATP synthase subunit a 1.